Here is a 510-residue protein sequence, read N- to C-terminus: Beta-glucosidase 34 (510 aa).

The first 26 residues, 1–26 (MGNGGRCMVEVVILLVLMAMSQGCDA), serve as a signal peptide directing secretion. Asn28 carries an N-linked (GlcNAc...) asparagine glycan. Gln52 is a binding site for a beta-D-glucoside. Asn120 carries an N-linked (GlcNAc...) asparagine glycan. A beta-D-glucoside is bound by residues His153 and 198 to 199 (NE). Glu199 acts as the Proton donor in catalysis. An intrachain disulfide couples Cys218 to Cys226. 2 N-linked (GlcNAc...) asparagine glycosylation sites follow: Asn279 and Asn331. Tyr342 is an a beta-D-glucoside binding site. An N-linked (GlcNAc...) asparagine glycan is attached at Asn360. Residues Glu415, Trp465, 472–473 (EW), and Phe481 contribute to the a beta-D-glucoside site. Catalysis depends on Glu415, which acts as the Nucleophile.

This sequence belongs to the glycosyl hydrolase 1 family.

It catalyses the reaction Hydrolysis of terminal, non-reducing beta-D-glucosyl residues with release of beta-D-glucose.. This is Beta-glucosidase 34 (BGLU34) from Oryza sativa subsp. japonica (Rice).